A 208-amino-acid polypeptide reads, in one-letter code: MARYTKAKCRLCRREGEKLFIKGDRCFTDKCSYERRPYAPGIAGRMRKKMSDYAIQLREKQKVRRMYGVLEGQFRSYFKRADGMKGVTGANLLMLLETRLDNTVYRLGFANSRAQARQLVKHGIFTKNGRRVNVPSMHVKPGDVIEVREESRKIPVIAEAQEVIARRGCPEWLEADGANFKGEVKAMPTREDIQFPINEQLIVELYSK.

The S4 RNA-binding domain occupies 98–161 (TRLDNTVYRL…RKIPVIAEAQ (64 aa)).

It belongs to the universal ribosomal protein uS4 family. In terms of assembly, part of the 30S ribosomal subunit. Contacts protein S5. The interaction surface between S4 and S5 is involved in control of translational fidelity.

Functionally, one of the primary rRNA binding proteins, it binds directly to 16S rRNA where it nucleates assembly of the body of the 30S subunit. In terms of biological role, with S5 and S12 plays an important role in translational accuracy. This Maridesulfovibrio salexigens (strain ATCC 14822 / DSM 2638 / NCIMB 8403 / VKM B-1763) (Desulfovibrio salexigens) protein is Small ribosomal subunit protein uS4.